A 1091-amino-acid polypeptide reads, in one-letter code: ATP-dependent helicase/deoxyribonuclease subunit B (1091 aa).

This sequence belongs to the helicase family. AddB/RexB type 2 subfamily. In terms of assembly, heterodimer of AddA and RexB. It depends on Mg(2+) as a cofactor.

The heterodimer acts as both an ATP-dependent DNA helicase and an ATP-dependent, dual-direction single-stranded exonuclease. Recognizes the chi site generating a DNA molecule suitable for the initiation of homologous recombination. This subunit has 5' -&gt; 3' nuclease activity but not helicase activity. This Streptococcus pneumoniae (strain ATCC 700669 / Spain 23F-1) protein is ATP-dependent helicase/deoxyribonuclease subunit B.